Consider the following 37-residue polypeptide: Cellular retinoic acid-binding protein 2 (37 aa).

A Nuclear localization signal motif is present at residues K21–K31.

It belongs to the calycin superfamily. Fatty-acid binding protein (FABP) family. As to expression, embryo.

The protein localises to the cytoplasm. Its subcellular location is the endoplasmic reticulum. It is found in the nucleus. Its function is as follows. Transports retinoic acid to the nucleus. Regulates the access of retinoic acid to the nuclear retinoic acid receptors. The polypeptide is Cellular retinoic acid-binding protein 2 (CRABP2) (Gallus gallus (Chicken)).